The sequence spans 348 residues: Casein kinase II subunit alpha (348 aa).

The Protein kinase domain maps to 55-340 (YEIVRKIGRG…PLEAMEHPFF (286 aa)). ATP-binding positions include 61–69 (IGRGKFSEV) and K84. D172 serves as the catalytic Proton acceptor.

Belongs to the protein kinase superfamily. Ser/Thr protein kinase family. CK2 subfamily. In terms of assembly, tetramer of two alpha and two beta chains.

The protein localises to the cytoplasm. The catalysed reaction is L-seryl-[protein] + ATP = O-phospho-L-seryl-[protein] + ADP + H(+). It catalyses the reaction L-threonyl-[protein] + ATP = O-phospho-L-threonyl-[protein] + ADP + H(+). Functionally, casein kinases are operationally defined by their preferential utilization of acidic proteins such as caseins as substrates. The alpha chain contains the catalytic site. This chain is Casein kinase II subunit alpha, found in Theileria annulata.